Here is a 444-residue protein sequence, read N- to C-terminus: Phosphoglucosamine mutase (444 aa).

Ser101 functions as the Phosphoserine intermediate in the catalytic mechanism. Residues Ser101, Asp239, Asp241, and Asp243 each coordinate Mg(2+). Ser101 bears the Phosphoserine mark.

The protein belongs to the phosphohexose mutase family. It depends on Mg(2+) as a cofactor. Activated by phosphorylation.

The enzyme catalyses alpha-D-glucosamine 1-phosphate = D-glucosamine 6-phosphate. Functionally, catalyzes the conversion of glucosamine-6-phosphate to glucosamine-1-phosphate. The protein is Phosphoglucosamine mutase of Alcanivorax borkumensis (strain ATCC 700651 / DSM 11573 / NCIMB 13689 / SK2).